Here is a 425-residue protein sequence, read N- to C-terminus: 5-methylthioadenosine/S-adenosylhomocysteine deaminase (425 aa).

Zn(2+) contacts are provided by His63 and His65. Residues Glu92 and His184 each contribute to the substrate site. His211 serves as a coordination point for Zn(2+). Residues Glu214 and Asp299 each coordinate substrate. Position 299 (Asp299) interacts with Zn(2+).

This sequence belongs to the metallo-dependent hydrolases superfamily. MTA/SAH deaminase family. Zn(2+) serves as cofactor.

It catalyses the reaction S-adenosyl-L-homocysteine + H2O + H(+) = S-inosyl-L-homocysteine + NH4(+). It carries out the reaction S-methyl-5'-thioadenosine + H2O + H(+) = S-methyl-5'-thioinosine + NH4(+). In terms of biological role, catalyzes the deamination of 5-methylthioadenosine and S-adenosyl-L-homocysteine into 5-methylthioinosine and S-inosyl-L-homocysteine, respectively. Is also able to deaminate adenosine. The polypeptide is 5-methylthioadenosine/S-adenosylhomocysteine deaminase (Pyrococcus abyssi (strain GE5 / Orsay)).